The sequence spans 335 residues: Phosphate acyltransferase (335 aa).

The protein belongs to the PlsX family. Homodimer. Probably interacts with PlsY.

The protein localises to the cytoplasm. The catalysed reaction is a fatty acyl-[ACP] + phosphate = an acyl phosphate + holo-[ACP]. It participates in lipid metabolism; phospholipid metabolism. Its function is as follows. Catalyzes the reversible formation of acyl-phosphate (acyl-PO(4)) from acyl-[acyl-carrier-protein] (acyl-ACP). This enzyme utilizes acyl-ACP as fatty acyl donor, but not acyl-CoA. The polypeptide is Phosphate acyltransferase (Streptococcus equi subsp. zooepidemicus (strain H70)).